We begin with the raw amino-acid sequence, 421 residues long: Alpha-tubulin N-acetyltransferase 1 (421 aa).

The N-acetyltransferase domain maps to 1–190 (MEFPFDVDAL…NNFVIFEGFF (190 aa)). K56 carries the post-translational modification N6-acetyllysine; by autocatalysis. 124–137 (FYIHESVQRHGHGR) contributes to the acetyl-CoA binding site. An N6-acetyllysine; by autocatalysis modification is found at K146. Position 160-169 (160-169 (SPKLLKFLNK)) interacts with acetyl-CoA. A disordered region spans residues 214-235 (PIPAAPARKLPPKRAEGDIKPY). Basic and acidic residues predominate over residues 226 to 235 (KRAEGDIKPY). An N6-acetyllysine; by autocatalysis mark is found at K233 and K244. Residues 252–284 (PLNRAPRRATPPAHPPPRSSSLGNSPDRGPLRP) form a disordered region. S272 and S276 each carry phosphoserine. At R305 the chain carries Asymmetric dimethylarginine. S315 bears the Phosphoserine mark. R323 carries the post-translational modification Omega-N-methylarginine. Positions 342 to 351 (FNTSFLGTGN) are enriched in polar residues. Residues 342-398 (FNTSFLGTGNQERKQGEQEAEDRSASEDQVLLQDGSGEEPTHTVAPRAQAPPAQSWM) form a disordered region. Residues 352–367 (QERKQGEQEAEDRSAS) are compositionally biased toward basic and acidic residues.

The protein belongs to the acetyltransferase ATAT1 family. In terms of assembly, component of the BBSome complex. Interacts with AP2 alpha-adaptins, including AP2A2, but not with AP1 gamma-adaptin (AP1G1/AP1G2); this interaction is required for efficient alpha-tubulin acetylation, hence clathrin-coated pits are sites of microtubule acetylation. In terms of processing, autoacetylation strongly increases tubulin acetylation.

The protein localises to the cytoplasm. It localises to the membrane. The protein resides in the clathrin-coated pit. It is found in the cell junction. Its subcellular location is the focal adhesion. The protein localises to the cell projection. It localises to the axon. The protein resides in the cytoskeleton. It is found in the spindle. It catalyses the reaction L-lysyl-[alpha-tubulin] + acetyl-CoA = N(6)-acetyl-L-lysyl-[alpha-tubulin] + CoA + H(+). In terms of biological role, specifically acetylates 'Lys-40' in alpha-tubulin on the lumenal side of microtubules. Promotes microtubule destabilization and accelerates microtubule dynamics; this activity may be independent of acetylation activity. Acetylates alpha-tubulin with a slow enzymatic rate, due to a catalytic site that is not optimized for acetyl transfer. Enters the microtubule through each end and diffuses quickly throughout the lumen of microtubules. Acetylates only long/old microtubules because of its slow acetylation rate since it does not have time to act on dynamically unstable microtubules before the enzyme is released. Required for normal sperm flagellar function. Promotes directional cell locomotion and chemotaxis, through AP2A2-dependent acetylation of alpha-tubulin at clathrin-coated pits that are concentrated at the leading edge of migrating cells. May facilitate primary cilium assembly. The polypeptide is Alpha-tubulin N-acetyltransferase 1 (Rattus norvegicus (Rat)).